We begin with the raw amino-acid sequence, 163 residues long: Probable cyclic pyranopterin monophosphate synthase (163 aa).

Residues 1 to 23 (MPDGDDDALTHTTADGDAQMVDV) are disordered. Substrate is bound by residues 80 to 82 (MCH) and 116 to 117 (ME). The active site involves D131.

It belongs to the MoaC family. In terms of assembly, homohexamer; trimer of dimers.

It catalyses the reaction (8S)-3',8-cyclo-7,8-dihydroguanosine 5'-triphosphate = cyclic pyranopterin phosphate + diphosphate. Its pathway is cofactor biosynthesis; molybdopterin biosynthesis. Functionally, catalyzes the conversion of (8S)-3',8-cyclo-7,8-dihydroguanosine 5'-triphosphate to cyclic pyranopterin monophosphate (cPMP). This Halobacterium salinarum (strain ATCC 29341 / DSM 671 / R1) protein is Probable cyclic pyranopterin monophosphate synthase.